A 22-amino-acid chain; its full sequence is GVVDILKGAAKDIAGHLASKVM.

M22 bears the Methionine amide mark.

As to expression, expressed by the skin glands.

The protein localises to the secreted. In terms of biological role, antibacterial peptide that inhibits Gram-negative bacteria A.actinomycetemcomitans ATCC 29522 (MIC=222.37 uM) and E.coli ATCC 25922 (MIC=114.04 uM). Also has antifungal activity against C.albicans ATCC 18804 (MIC=233.55 uM) and C.lusitaniae ATCC 56936 (MIC=233.55 uM). No activity against the Gram-positive bacterium S.aureus ATCC 25923. Shows virtually no hemolytic activity towards rabbit erythrocytes. This Leptodactylus labyrinthicus (Labyrinth frog) protein is Ocellatin-LB1.